Reading from the N-terminus, the 1382-residue chain is Hepatocyte growth factor receptor (1382 aa).

An N-terminal signal peptide occupies residues 1–24 (MKAPAVLAPGILVLLFTLVQKSYG). Residues 25–933 (ECREALVKSE…VIVQPDQNFT (909 aa)) are Extracellular-facing. A Sema domain is found at 27–516 (REALVKSEMN…TGKKITKIPL (490 aa)). N45 carries N-linked (GlcNAc...) asparagine glycosylation. 4 disulfides stabilise this stretch: C95–C101, C98–C160, C133–C141, and C173–C176. N-linked (GlcNAc...) asparagine glycosylation is present at N106. Residues N203 and N359 are each glycosylated (N-linked (GlcNAc...) asparagine). 2 disulfide bridges follow: C299–C364 and C386–C398. N-linked (GlcNAc...) asparagine glycosylation is found at N400 and N406. Disulfide bonds link C521-C539, C527-C562, C530-C546, and C542-C552. IPT/TIG domains are found at residues 564–656 (PTIY…FSYV), 658–740 (PVIT…FSYQ), and 743–837 (PIVY…LIYV). An O-linked (Man) threonine glycan is attached at T583. N608 and N636 each carry an N-linked (GlcNAc...) asparagine glycan. T677 and T762 each carry an O-linked (Man) threonine glycan. N-linked (GlcNAc...) asparagine glycans are attached at residues N786, N880, and N931. A helical membrane pass occupies residues 934–956 (GLIVGVISISIILLLLLGVFLWL). The Cytoplasmic portion of the chain corresponds to 957–1382 (KKRKQIKDLG…QDNIDGEGDT (426 aa)). S967 carries the post-translational modification Phosphoserine. Position 978 is a phosphothreonine (T978). 3 positions are modified to phosphoserine: S991, S998, and S1001. Y1004 is modified (phosphotyrosine). In terms of domain architecture, Protein kinase spans 1079-1346 (VHFNEVIGRG…RISAIFSTFI (268 aa)). ATP contacts are provided by residues 1085-1093 (IGRGHFGCV) and K1111. Catalysis depends on D1205, which acts as the Proton acceptor. An interaction with RANBP9 region spans residues 1213–1382 (LDEKFTVKVA…QDNIDGEGDT (170 aa)). At Y1231 the chain carries Phosphotyrosine. A phosphotyrosine; by autocatalysis mark is found at Y1235 and Y1236. T1290 carries the post-translational modification Phosphothreonine. An interaction with MUC20 region spans residues 1321–1360 (WHPKAELRPSFSELVSRISAIFSTFIGEHYVHVNATYVNV). Residues Y1350 and Y1357 each carry the phosphotyrosine; by autocatalysis modification. Y1366 carries the post-translational modification Phosphotyrosine.

This sequence belongs to the protein kinase superfamily. Tyr protein kinase family. As to quaternary structure, heterodimer made of an alpha chain (50 kDa) and a beta chain (145 kDa) which are disulfide linked. Binds PLXNB1. Interacts when phosphorylated with downstream effectors including STAT3, PIK3R1, SRC, PCLG1, GRB2 and GAB1. Interacts with SPSB1, SPSB2 and SPSB4. Interacts with INPP5D/SHIP1. When phosphorylated at Tyr-1357, interacts with INPPL1/SHIP2. Interacts with RANBP9 and RANBP10, as well as SPSB1, SPSB2, SPSB3 and SPSB4. SPSB1 binding occurs in the presence and in the absence of HGF, however HGF treatment has a positive effect on this interaction. Interacts with MUC20; prevents interaction with GRB2 and suppresses hepatocyte growth factor-induced cell proliferation. Interacts with GRB10. Interacts with PTPN1 and PTPN2. Interacts with HSP90AA1 and HSP90AB1; the interaction suppresses MET kinase activity. Interacts with tensin TNS3. Interacts (when phosphorylated) with tensin TNS4 (via SH2 domain); the interaction increases MET protein stability by inhibiting MET endocytosis and subsequent lysosomal degradation. Autophosphorylated in response to ligand binding on Tyr-1235 and Tyr-1236 in the kinase domain leading to further phosphorylation of Tyr-1350 and Tyr-1357 in the C-terminal multifunctional docking site. Dephosphorylated by PTPRJ at Tyr-1350 and Tyr-1366. Dephosphorylated by PTPN1 and PTPN2. In terms of processing, ubiquitinated. Ubiquitination by CBL regulates the receptor stability and activity through proteasomal degradation. Post-translationally, O-mannosylation of IPT/TIG domains by TMEM260 is required for protein maturation. O-mannosylated residues are composed of single mannose glycans that are not elongated or modified.

The protein localises to the membrane. It carries out the reaction L-tyrosyl-[protein] + ATP = O-phospho-L-tyrosyl-[protein] + ADP + H(+). Its activity is regulated as follows. In its inactive state, the C-terminal tail interacts with the catalytic domain and inhibits the kinase activity. Upon ligand binding, the C-terminal tail is displaced and becomes phosphorylated, thus increasing the kinase activity. Functionally, receptor tyrosine kinase that transduces signals from the extracellular matrix into the cytoplasm by binding to hepatocyte growth factor/HGF ligand. Regulates many physiological processes including proliferation, scattering, morphogenesis and survival. Ligand binding at the cell surface induces autophosphorylation of MET on its intracellular domain that provides docking sites for downstream signaling molecules. Following activation by ligand, interacts with the PI3-kinase subunit PIK3R1, PLCG1, SRC, GRB2, STAT3 or the adapter GAB1. Recruitment of these downstream effectors by MET leads to the activation of several signaling cascades including the RAS-ERK, PI3 kinase-AKT, or PLCgamma-PKC. The RAS-ERK activation is associated with the morphogenetic effects while PI3K/AKT coordinates prosurvival effects. During embryonic development, MET signaling plays a role in gastrulation, development and migration of muscles and neuronal precursors, angiogenesis and kidney formation. In adults, participates in wound healing as well as organ regeneration and tissue remodeling. Also promotes differentiation and proliferation of hematopoietic cells. The polypeptide is Hepatocyte growth factor receptor (MET) (Felis catus (Cat)).